A 319-amino-acid chain; its full sequence is BTB/POZ domain-containing adapter for CUL3-mediated RhoA degradation protein 2 (319 aa).

Residues 31–99 (KYIRLNVGGC…LRDDTIALPK (69 aa)) form the BTB domain.

Belongs to the BACURD family. As to quaternary structure, component of the BCR(TNFAIP1) E3 ubiquitin ligase complex, at least composed of cul3, tnfaip1/bacurd2 and rbx1.

The protein resides in the cytoplasm. It is found in the nucleus. Its subcellular location is the endosome. It participates in protein modification; protein ubiquitination. Substrate-specific adapter of a BCR (BTB-CUL3-RBX1) E3 ubiquitin-protein ligase complex involved in regulation of cytoskeleton structure. The BCR(TNFAIP1) E3 ubiquitin ligase complex mediates the ubiquitination of target proteins, leading to their degradation by the proteasome. This chain is BTB/POZ domain-containing adapter for CUL3-mediated RhoA degradation protein 2 (tnfaip1), found in Xenopus laevis (African clawed frog).